The sequence spans 280 residues: Phosphatidylglycerol--prolipoprotein diacylglyceryl transferase (280 aa).

3 helical membrane-spanning segments follow: residues 19–39 (LSVR…YFVA), 56–76 (IIFY…VIFQ), and 90–110 (IWHG…AGVI). Arg-138 serves as a coordination point for a 1,2-diacyl-sn-glycero-3-phospho-(1'-sn-glycerol). A run of 2 helical transmembrane segments spans residues 204 to 224 (LGET…FIEG) and 236 to 256 (IRVA…LIVY).

This sequence belongs to the Lgt family.

The protein resides in the cell membrane. It catalyses the reaction L-cysteinyl-[prolipoprotein] + a 1,2-diacyl-sn-glycero-3-phospho-(1'-sn-glycerol) = an S-1,2-diacyl-sn-glyceryl-L-cysteinyl-[prolipoprotein] + sn-glycerol 1-phosphate + H(+). It functions in the pathway protein modification; lipoprotein biosynthesis (diacylglyceryl transfer). Its function is as follows. Catalyzes the transfer of the diacylglyceryl group from phosphatidylglycerol to the sulfhydryl group of the N-terminal cysteine of a prolipoprotein, the first step in the formation of mature lipoproteins. The protein is Phosphatidylglycerol--prolipoprotein diacylglyceryl transferase of Staphylococcus aureus (strain MRSA252).